Reading from the N-terminus, the 192-residue chain is Xanthine phosphoribosyltransferase (192 aa).

2 residues coordinate xanthine: Leu-20 and Asn-27. 128 to 132 serves as a coordination point for 5-phospho-alpha-D-ribose 1-diphosphate; the sequence is ANGDA. A xanthine-binding site is contributed by Lys-156.

Belongs to the purine/pyrimidine phosphoribosyltransferase family. Xpt subfamily. Homodimer.

Its subcellular location is the cytoplasm. The catalysed reaction is XMP + diphosphate = xanthine + 5-phospho-alpha-D-ribose 1-diphosphate. It participates in purine metabolism; XMP biosynthesis via salvage pathway; XMP from xanthine: step 1/1. Converts the preformed base xanthine, a product of nucleic acid breakdown, to xanthosine 5'-monophosphate (XMP), so it can be reused for RNA or DNA synthesis. This is Xanthine phosphoribosyltransferase from Staphylococcus aureus (strain JH1).